The sequence spans 342 residues: Protein pelota homolog (342 aa).

Belongs to the eukaryotic release factor 1 family. Pelota subfamily. Monomer. Requires a divalent metal cation as cofactor.

Its subcellular location is the cytoplasm. Its function is as follows. May function in recognizing stalled ribosomes, interact with stem-loop structures in stalled mRNA molecules, and effect endonucleolytic cleavage of the mRNA. May play a role in the release non-functional ribosomes and degradation of damaged mRNAs. Has endoribonuclease activity. The sequence is that of Protein pelota homolog from Sulfolobus acidocaldarius (strain ATCC 33909 / DSM 639 / JCM 8929 / NBRC 15157 / NCIMB 11770).